The chain runs to 402 residues: Tryptophan synthase beta chain (402 aa).

Position 88 is an N6-(pyridoxal phosphate)lysine (Lys-88).

The protein belongs to the TrpB family. Tetramer of two alpha and two beta chains. Pyridoxal 5'-phosphate is required as a cofactor.

It catalyses the reaction (1S,2R)-1-C-(indol-3-yl)glycerol 3-phosphate + L-serine = D-glyceraldehyde 3-phosphate + L-tryptophan + H2O. It participates in amino-acid biosynthesis; L-tryptophan biosynthesis; L-tryptophan from chorismate: step 5/5. Functionally, the beta subunit is responsible for the synthesis of L-tryptophan from indole and L-serine. The chain is Tryptophan synthase beta chain (trpB) from Pasteurella multocida (strain Pm70).